The sequence spans 628 residues: EIN3-binding F-box protein 1 (628 aa).

Positions 61–109 (PVSIDVLPDECLFEIFRRLSGPQERSACAFVSKQWLTLVSSIRQKEIDV) constitute an F-box domain.

As to quaternary structure, part of a SCF (SKP1-cullin-F-box) protein ligase complex. Interacts with CUL1, SKP1A/ASK1, SKP1B/ASK2, ASK11, ASK12, ASK13, ASK18, EIN3, and EIL1. Ubiquitous.

It localises to the nucleus. It functions in the pathway protein modification; protein ubiquitination. Its function is as follows. Component of SCF(EBF1) E3 ubiquitin ligase complexes, which may mediate the ubiquitination and subsequent proteasomal degradation of target proteins (probably including EIN3 and EIL1). Regulator of the ethylene signaling cascade by modulating the stability of EIN3 and EIL1 proteins. Confers insensitivity to ethylene. The polypeptide is EIN3-binding F-box protein 1 (EBF1) (Arabidopsis thaliana (Mouse-ear cress)).